Reading from the N-terminus, the 279-residue chain is Urease accessory protein UreD (279 aa).

Belongs to the UreD family. As to quaternary structure, ureD, UreF and UreG form a complex that acts as a GTP-hydrolysis-dependent molecular chaperone, activating the urease apoprotein by helping to assemble the nickel containing metallocenter of UreC. The UreE protein probably delivers the nickel.

It is found in the cytoplasm. Functionally, required for maturation of urease via the functional incorporation of the urease nickel metallocenter. The protein is Urease accessory protein UreD of Nostoc sp. (strain PCC 7120 / SAG 25.82 / UTEX 2576).